Consider the following 310-residue polypeptide: 3,5-dioxohexanoate:acetyl-CoA acetone transferase (310 aa).

His49, His51, and Glu258 together coordinate Zn(2+).

Belongs to the BKACE family. The cofactor is Zn(2+).

The enzyme catalyses 3,5-dioxohexanoate + acetyl-CoA = acetoacetyl-CoA + acetoacetate. Functionally, catalyzes the condensation of 3,5-dioxohexanoate and acetyl-CoA, forming acetoacetate and acetoacetyl-CoA. May be involved in fatty acid biosynthesis rescue via triacetic acid lactone. This chain is 3,5-dioxohexanoate:acetyl-CoA acetone transferase, found in Paraburkholderia graminis (strain ATCC 700544 / DSM 17151 / LMG 18924 / NCIMB 13744 / C4D1M).